The chain runs to 238 residues: Ribonuclease HII (238 aa).

Residues 23-215 (QRLCGVDEAG…VREALARLPM (193 aa)) enclose the RNase H type-2 domain. 3 residues coordinate a divalent metal cation: Asp29, Glu30, and Asp124.

Belongs to the RNase HII family. Mn(2+) serves as cofactor. The cofactor is Mg(2+).

The protein localises to the cytoplasm. It carries out the reaction Endonucleolytic cleavage to 5'-phosphomonoester.. Endonuclease that specifically degrades the RNA of RNA-DNA hybrids. This is Ribonuclease HII from Cupriavidus necator (strain ATCC 17699 / DSM 428 / KCTC 22496 / NCIMB 10442 / H16 / Stanier 337) (Ralstonia eutropha).